Consider the following 248-residue polypeptide: Protein UL24 homolog (248 aa).

A disordered region spans residues 194-248; that stretch reads DRPRPTAQGHRPRTHVGPKPSQLTARVPRSARAGRAGGRKGQVGAVGQVCPGAQK. Over residues 218 to 227 the composition is skewed to low complexity; the sequence is ARVPRSARAG.

It belongs to the herpesviridae UL24 family.

Its subcellular location is the virion. The protein resides in the host cytoplasm. It localises to the host nucleus. It is found in the host nucleolus. The protein localises to the host Golgi apparatus. Its function is as follows. May participate in nuclear egress of viral particles. Plays a role in the dispersal of several host nucleolar proteins including NCL/nucleolin and NPM1. Since deletion of host NCL/nucleolin negatively impact on nuclear egress, UL24 supposedly acts on this process through its effect on host nucleoli. The chain is Protein UL24 homolog from Homo sapiens (Human).